Reading from the N-terminus, the 316-residue chain is BTB/POZ domain-containing adapter for CUL3-mediated RhoA degradation protein 2 (316 aa).

Residues 28–96 (KYVQLNVGGS…LRDDTITLPQ (69 aa)) form the BTB domain. A compositionally biased stretch (polar residues) spans 268–279 (EATSRSRSQASP). Positions 268-288 (EATSRSRSQASPSEDEDTFEL) are disordered. Position 278 is a phosphoserine (Ser278). Ser280 is subject to Phosphoserine; by CK2.

This sequence belongs to the BACURD family. As to quaternary structure, component of the BCR(TNFAIP1) E3 ubiquitin ligase complex, at least composed of CUL3, TNFAIP1/BACURD2 and RBX1. Interacts with RHOA; with a preference for RhoA-GDP. Interacts with RHOB. Interacts with PCNA. Interacts with CSNK2B. In terms of processing, phosphorylation at Ser-280 by CK2 facilitates the nucleus localization and increases interaction with PCNA.

It localises to the cytoplasm. Its subcellular location is the nucleus. The protein resides in the endosome. It functions in the pathway protein modification; protein ubiquitination. Functionally, substrate-specific adapter of a BCR (BTB-CUL3-RBX1) E3 ubiquitin-protein ligase complex involved in regulation of cytoskeleton structure. The BCR(TNFAIP1) E3 ubiquitin ligase complex mediates the ubiquitination of RHOA, leading to its degradation by the proteasome, thereby regulating the actin cytoskeleton and cell migration. Its interaction with RHOB may regulate apoptosis. May enhance the PCNA-dependent DNA polymerase delta activity. This Mus musculus (Mouse) protein is BTB/POZ domain-containing adapter for CUL3-mediated RhoA degradation protein 2 (Tnfaip1).